Reading from the N-terminus, the 326-residue chain is MTERYADKQIKLFSLTSNLPIAEKIAKAAGIPLGKMSSRQFSDGEIMINIEETVRGDDIYIIQSTSFPVNDNLWELLIMIDACQRASANTVNIVLPYFGYSRQDRVAKPREPITAKLVANMLTKAGIDRVVTLDLHAVQVQGFFDIPVDNLFTVPLFAERYSKLGLSGSDVVVVSPKNSGIKRARSLAEYLDSPIAIIDYAQDDSEREQGYIIGDVSGKKAILIDDILNTGKTFAEAAKILERSGATDTYAVASHGLFAGGAAEVLETAPIKEIIVTDSVKTKNRVPENVTYLSASDLIAEAIIRIHERRPLSPLFSYQPKGKNNA.

Residues 43 to 45 and 102 to 103 contribute to the ATP site; these read DGE and RQ. His-136 is a Mg(2+) binding site. Residues Asp-225 and 229–233 each bind D-ribose 5-phosphate; that span reads NTGKT.

This sequence belongs to the ribose-phosphate pyrophosphokinase family. Class I subfamily. Homohexamer. The cofactor is Mg(2+).

It is found in the cytoplasm. It catalyses the reaction D-ribose 5-phosphate + ATP = 5-phospho-alpha-D-ribose 1-diphosphate + AMP + H(+). Its pathway is metabolic intermediate biosynthesis; 5-phospho-alpha-D-ribose 1-diphosphate biosynthesis; 5-phospho-alpha-D-ribose 1-diphosphate from D-ribose 5-phosphate (route I): step 1/1. Functionally, involved in the biosynthesis of the central metabolite phospho-alpha-D-ribosyl-1-pyrophosphate (PRPP) via the transfer of pyrophosphoryl group from ATP to 1-hydroxyl of ribose-5-phosphate (Rib-5-P). The chain is Putative ribose-phosphate pyrophosphokinase 2 from Streptococcus pyogenes serotype M3 (strain SSI-1).